Reading from the N-terminus, the 265-residue chain is UDP-N-acetylenolpyruvoylglucosamine reductase (265 aa).

An FAD-binding PCMH-type domain is found at 15-169 (GVGGPAELWT…TRVRLKLKER (155 aa)). R149 is a catalytic residue. Positions 182–203 (DRARKGQPKRKSAGCAFKNPPG) are disordered. C196 (proton donor) is an active-site residue.

The protein belongs to the MurB family. FAD serves as cofactor.

Its subcellular location is the cytoplasm. It carries out the reaction UDP-N-acetyl-alpha-D-muramate + NADP(+) = UDP-N-acetyl-3-O-(1-carboxyvinyl)-alpha-D-glucosamine + NADPH + H(+). The protein operates within cell wall biogenesis; peptidoglycan biosynthesis. In terms of biological role, cell wall formation. This is UDP-N-acetylenolpyruvoylglucosamine reductase from Thermus thermophilus (strain ATCC 27634 / DSM 579 / HB8).